A 255-amino-acid polypeptide reads, in one-letter code: 5-oxoprolinase subunit A (255 aa).

Belongs to the LamB/PxpA family. As to quaternary structure, forms a complex composed of PxpA, PxpB and PxpC.

It catalyses the reaction 5-oxo-L-proline + ATP + 2 H2O = L-glutamate + ADP + phosphate + H(+). Catalyzes the cleavage of 5-oxoproline to form L-glutamate coupled to the hydrolysis of ATP to ADP and inorganic phosphate. The chain is 5-oxoprolinase subunit A from Campylobacter jejuni subsp. doylei (strain ATCC BAA-1458 / RM4099 / 269.97).